The following is a 322-amino-acid chain: uncharacterized protein (322 aa).

Positions 205–286 form a coiled coil; sequence QEIKNAHAAL…LKKAISEAVQ (82 aa). Basic and acidic residues-rich tracts occupy residues 254–281 and 290–299; these read EKEE…KKAI and DRIEAIEKSR. The disordered stretch occupies residues 254 to 322; the sequence is EKEEELNKKD…VQKSIWSGLF (69 aa). Residues 310–322 show a composition bias toward polar residues; it reads SEQVQKSIWSGLF.

This sequence to B.subtilis XkdF.

This is an uncharacterized protein from Bacillus subtilis (strain 168).